The chain runs to 425 residues: Histidine--tRNA ligase (425 aa).

It belongs to the class-II aminoacyl-tRNA synthetase family. Homodimer.

It localises to the cytoplasm. The catalysed reaction is tRNA(His) + L-histidine + ATP = L-histidyl-tRNA(His) + AMP + diphosphate + H(+). This is Histidine--tRNA ligase from Shewanella sp. (strain W3-18-1).